Here is an 85-residue protein sequence, read N- to C-terminus: Conotoxin Mi15b (85 aa).

The N-terminal stretch at 1–23 (MEKLTVLILVAIVLLTIQVLGQS) is a signal peptide. A propeptide spanning residues 24–49 (DRDKHPKRRPRQYATKRLSALMKGHR) is cleaved from the precursor. Glutamine 50 carries the post-translational modification Pyrrolidone carboxylic acid.

This sequence belongs to the conotoxin O2 superfamily. Contains 4 disulfide bonds. As to expression, expressed by the venom duct.

The protein localises to the secreted. In Conus miles (Soldier cone), this protein is Conotoxin Mi15b.